Consider the following 624-residue polypeptide: Leucine-rich repeat, immunoglobulin-like domain and transmembrane domain-containing protein 1 (624 aa).

The N-terminal stretch at Met1 to Gly21 is a signal peptide. The LRRNT domain maps to Phe22–Pro59. At Phe22–Arg527 the chain is on the lumenal side. LRR repeat units lie at residues Asp60–Pro81, Arg84–Gly105, Arg108–Asp129, Gln132–Phe153, and Asn156–Val177. N-linked (GlcNAc...) asparagine glycosylation is present at Asn156. One can recognise an LRRCT domain in the interval Asn201–Ser254. The Ig-like C2-type domain occupies Pro267–Gly336. Cys276 and Cys329 are joined by a disulfide. N-linked (GlcNAc...) asparagine glycans are attached at residues Asn297 and Asn456. In terms of domain architecture, Fibronectin type-III spans Met431–Val519. Residues Gln526 to Cys549 form an LRR 6 repeat. Residues Leu528–Val548 traverse the membrane as a helical segment. Topologically, residues Cys549–Cys624 are cytoplasmic.

In terms of assembly, may form a homodimer. Interacts with LRIT2; may form a heterodimer with LRIT2. Interacts (via its N-terminal extracellular domain) with metabotropic glutamate receptor GRM6. Interacts (via its extreme C-terminus) with the scaffold protein FRMPD2 (via the third PDZ domain); the interaction leads to their colocalization in photoreceptor synapses. Expressed predominantly in developing photoreceptor and bipolar cells.

It is found in the endoplasmic reticulum membrane. The protein localises to the cell projection. The protein resides in the dendrite. Functionally, photoreceptor synaptic protein essential for normal vision. Involved in synapse formation in cone photoreceptor cells. The chain is Leucine-rich repeat, immunoglobulin-like domain and transmembrane domain-containing protein 1 (Lrit1) from Mus musculus (Mouse).